We begin with the raw amino-acid sequence, 335 residues long: Holliday junction branch migration complex subunit RuvB (335 aa).

The interval 4 to 184 (ADRIISGQAK…FGIVQRLEFY (181 aa)) is large ATPase domain (RuvB-L). ATP contacts are provided by residues isoleucine 23, arginine 24, glycine 65, lysine 68, threonine 69, threonine 70, 131–133 (EDY), arginine 174, tyrosine 184, and arginine 221. Threonine 69 provides a ligand contact to Mg(2+). The interval 185-255 (SVEDLTSIVA…VAKQALSMLD (71 aa)) is small ATPAse domain (RuvB-S). The interval 258 to 335 (DAGFDYLDRK…RHFGLQKLSD (78 aa)) is head domain (RuvB-H). Arginine 294, arginine 313, and arginine 318 together coordinate DNA.

The protein belongs to the RuvB family. In terms of assembly, homohexamer. Forms an RuvA(8)-RuvB(12)-Holliday junction (HJ) complex. HJ DNA is sandwiched between 2 RuvA tetramers; dsDNA enters through RuvA and exits via RuvB. An RuvB hexamer assembles on each DNA strand where it exits the tetramer. Each RuvB hexamer is contacted by two RuvA subunits (via domain III) on 2 adjacent RuvB subunits; this complex drives branch migration. In the full resolvosome a probable DNA-RuvA(4)-RuvB(12)-RuvC(2) complex forms which resolves the HJ.

The protein resides in the cytoplasm. It carries out the reaction ATP + H2O = ADP + phosphate + H(+). Its function is as follows. The RuvA-RuvB-RuvC complex processes Holliday junction (HJ) DNA during genetic recombination and DNA repair, while the RuvA-RuvB complex plays an important role in the rescue of blocked DNA replication forks via replication fork reversal (RFR). RuvA specifically binds to HJ cruciform DNA, conferring on it an open structure. The RuvB hexamer acts as an ATP-dependent pump, pulling dsDNA into and through the RuvAB complex. RuvB forms 2 homohexamers on either side of HJ DNA bound by 1 or 2 RuvA tetramers; 4 subunits per hexamer contact DNA at a time. Coordinated motions by a converter formed by DNA-disengaged RuvB subunits stimulates ATP hydrolysis and nucleotide exchange. Immobilization of the converter enables RuvB to convert the ATP-contained energy into a lever motion, pulling 2 nucleotides of DNA out of the RuvA tetramer per ATP hydrolyzed, thus driving DNA branch migration. The RuvB motors rotate together with the DNA substrate, which together with the progressing nucleotide cycle form the mechanistic basis for DNA recombination by continuous HJ branch migration. Branch migration allows RuvC to scan DNA until it finds its consensus sequence, where it cleaves and resolves cruciform DNA. The polypeptide is Holliday junction branch migration complex subunit RuvB (Haemophilus influenzae (strain 86-028NP)).